The chain runs to 360 residues: Phosphoserine aminotransferase (360 aa).

Residue R41 coordinates L-glutamate. 4 residues coordinate pyridoxal 5'-phosphate: W101, T152, D172, and Q195. K196 bears the N6-(pyridoxal phosphate)lysine mark. Residue 237–238 (NT) participates in pyridoxal 5'-phosphate binding.

This sequence belongs to the class-V pyridoxal-phosphate-dependent aminotransferase family. SerC subfamily. As to quaternary structure, homodimer. Pyridoxal 5'-phosphate is required as a cofactor.

It localises to the cytoplasm. It catalyses the reaction O-phospho-L-serine + 2-oxoglutarate = 3-phosphooxypyruvate + L-glutamate. The enzyme catalyses 4-(phosphooxy)-L-threonine + 2-oxoglutarate = (R)-3-hydroxy-2-oxo-4-phosphooxybutanoate + L-glutamate. The protein operates within amino-acid biosynthesis; L-serine biosynthesis; L-serine from 3-phospho-D-glycerate: step 2/3. Its pathway is cofactor biosynthesis; pyridoxine 5'-phosphate biosynthesis; pyridoxine 5'-phosphate from D-erythrose 4-phosphate: step 3/5. Its function is as follows. Catalyzes the reversible conversion of 3-phosphohydroxypyruvate to phosphoserine and of 3-hydroxy-2-oxo-4-phosphonooxybutanoate to phosphohydroxythreonine. The chain is Phosphoserine aminotransferase from Burkholderia ambifaria (strain MC40-6).